The following is a 270-amino-acid chain: 3-methyl-2-oxobutanoate hydroxymethyltransferase (270 aa).

The Mg(2+) site is built by Asp-50 and Asp-89. 3-methyl-2-oxobutanoate-binding positions include 50 to 51 (DS), Asp-89, and Lys-118. A Mg(2+)-binding site is contributed by Glu-120. Catalysis depends on Glu-187, which acts as the Proton acceptor.

This sequence belongs to the PanB family. As to quaternary structure, homodecamer; pentamer of dimers. Mg(2+) is required as a cofactor.

It localises to the cytoplasm. It catalyses the reaction 3-methyl-2-oxobutanoate + (6R)-5,10-methylene-5,6,7,8-tetrahydrofolate + H2O = 2-dehydropantoate + (6S)-5,6,7,8-tetrahydrofolate. Its pathway is cofactor biosynthesis; (R)-pantothenate biosynthesis; (R)-pantoate from 3-methyl-2-oxobutanoate: step 1/2. Functionally, catalyzes the reversible reaction in which hydroxymethyl group from 5,10-methylenetetrahydrofolate is transferred onto alpha-ketoisovalerate to form ketopantoate. This is 3-methyl-2-oxobutanoate hydroxymethyltransferase from Helicobacter pylori (strain G27).